Here is a 294-residue protein sequence, read N- to C-terminus: 4-hydroxy-tetrahydrodipicolinate synthase (294 aa).

Pyruvate is bound at residue T47. The Proton donor/acceptor role is filled by Y135. K163 functions as the Schiff-base intermediate with substrate in the catalytic mechanism. Pyruvate is bound at residue T205.

The protein belongs to the DapA family. As to quaternary structure, homotetramer; dimer of dimers.

The protein localises to the cytoplasm. The catalysed reaction is L-aspartate 4-semialdehyde + pyruvate = (2S,4S)-4-hydroxy-2,3,4,5-tetrahydrodipicolinate + H2O + H(+). The protein operates within amino-acid biosynthesis; L-lysine biosynthesis via DAP pathway; (S)-tetrahydrodipicolinate from L-aspartate: step 3/4. In terms of biological role, catalyzes the condensation of (S)-aspartate-beta-semialdehyde [(S)-ASA] and pyruvate to 4-hydroxy-tetrahydrodipicolinate (HTPA). The sequence is that of 4-hydroxy-tetrahydrodipicolinate synthase from Rickettsia rickettsii.